Here is a 245-residue protein sequence, read N- to C-terminus: Probable phosphatase Spro_1934 (245 aa).

His-7, His-9, His-15, His-40, Glu-73, His-101, His-131, Asp-192, and His-194 together coordinate Zn(2+).

Belongs to the PHP family. As to quaternary structure, homotrimer. It depends on Zn(2+) as a cofactor.

The protein is Probable phosphatase Spro_1934 of Serratia proteamaculans (strain 568).